We begin with the raw amino-acid sequence, 358 residues long: Peptide chain release factor 1 (358 aa).

N5-methylglutamine is present on Gln234.

It belongs to the prokaryotic/mitochondrial release factor family. Methylated by PrmC. Methylation increases the termination efficiency of RF1.

It localises to the cytoplasm. Functionally, peptide chain release factor 1 directs the termination of translation in response to the peptide chain termination codons UAG and UAA. The chain is Peptide chain release factor 1 from Leifsonia xyli subsp. xyli (strain CTCB07).